The following is a 312-amino-acid chain: Zinc-finger homeodomain protein 9 (312 aa).

Residues 1 to 27 are disordered; it reads MLEVRSMDMTPKSPEPESETPTRIQPA. Phosphoserine is present on Ser13. The ZF-HD dimerization-type; degenerate zinc-finger motif lies at 52-103; that stretch reads YKECLKNHAAAIGGHALDGCGEFMPSPSSTPSDPTSLKCAACGCHRNFHRRE. Disordered stretches follow at residues 128–155 and 253–312; these read QPHHRHHPPPPLAPPLPRSPNSSSPPPI and FSGG…SSSS. The segment covering 136 to 155 has biased composition (pro residues); that stretch reads PPPLAPPLPRSPNSSSPPPI. Residues 192 to 255 constitute a DNA-binding region (homeobox); sequence RKRFRTKFSS…NNKNSFKFSG (64 aa). Phosphoserine is present on Ser273.

As to quaternary structure, homo- and heterodimer with other ZFHD proteins. Interacts with MIF3; this interaction prevents nuclear localization and DNA-binding to inhibit transcription regulation activity. Binds to ZHD1, ZHD2 and ZHD11. As to expression, mostly expressed in flowers, stems and inflorescence and, to a lower extent, in leaves and stems.

The protein resides in the nucleus. Functionally, putative transcription factor. This chain is Zinc-finger homeodomain protein 9 (ZHD9), found in Arabidopsis thaliana (Mouse-ear cress).